The chain runs to 125 residues: uncharacterized protein (125 aa).

The segment at 36–57 is disordered; sequence EAKKAKEKQDSKTKDTDKKVDQ. A helical membrane pass occupies residues 92–112; that stretch reads ITIFLLIVLVSAIMIGIYFGI.

The protein localises to the membrane. This is an uncharacterized protein from Mycoplasma pneumoniae (strain ATCC 29342 / M129 / Subtype 1) (Mycoplasmoides pneumoniae).